Reading from the N-terminus, the 97-residue chain is MEMKIDALAGTLESSDVMVRIGPAAQPGIQLEIDSIVKQQFGAAIEQVVRETLAQLGVKQANVVVDDKGALECVLRARVQAAALRAAQQTQLQWSQL.

Serine 14 is subject to O-(phosphoribosyl dephospho-coenzyme A)serine.

It belongs to the CitD family. Oligomer with a subunit composition of (alpha,beta,gamma)6.

It localises to the cytoplasm. Its function is as follows. Covalent carrier of the coenzyme of citrate lyase. The polypeptide is Citrate lyase acyl carrier protein (Klebsiella pneumoniae subsp. pneumoniae (strain ATCC 700721 / MGH 78578)).